Consider the following 105-residue polypeptide: Small ribosomal subunit protein uS10 (105 aa).

It belongs to the universal ribosomal protein uS10 family. In terms of assembly, part of the 30S ribosomal subunit.

Functionally, involved in the binding of tRNA to the ribosomes. The sequence is that of Small ribosomal subunit protein uS10 from Trichodesmium erythraeum (strain IMS101).